A 316-amino-acid chain; its full sequence is N-acetylmuramic acid 6-phosphate etherase (316 aa).

Residues 1–23 (MAGFDPTLQPSDDRGHLLTEQSN) are disordered. One can recognise an SIS domain in the interval 66–229 (ISKRLSSGGR…STTVMVRLGK (164 aa)). Residue E94 is the Proton donor of the active site. Residue E125 is part of the active site.

This sequence belongs to the GCKR-like family. MurNAc-6-P etherase subfamily. In terms of assembly, homodimer.

The enzyme catalyses N-acetyl-D-muramate 6-phosphate + H2O = N-acetyl-D-glucosamine 6-phosphate + (R)-lactate. Its pathway is amino-sugar metabolism; N-acetylmuramate degradation. Functionally, specifically catalyzes the cleavage of the D-lactyl ether substituent of MurNAc 6-phosphate, producing GlcNAc 6-phosphate and D-lactate. This chain is N-acetylmuramic acid 6-phosphate etherase, found in Synechococcus sp. (strain CC9902).